A 401-amino-acid chain; its full sequence is Probable tRNA sulfurtransferase (401 aa).

Residues Thr-63–Arg-168 enclose the THUMP domain. Residues Leu-186 to Leu-187, Tyr-211 to Phe-212, Arg-268, Gly-290, and Gln-299 each bind ATP.

The protein belongs to the ThiI family.

The protein resides in the cytoplasm. The catalysed reaction is [ThiI sulfur-carrier protein]-S-sulfanyl-L-cysteine + a uridine in tRNA + 2 reduced [2Fe-2S]-[ferredoxin] + ATP + H(+) = [ThiI sulfur-carrier protein]-L-cysteine + a 4-thiouridine in tRNA + 2 oxidized [2Fe-2S]-[ferredoxin] + AMP + diphosphate. It catalyses the reaction [ThiS sulfur-carrier protein]-C-terminal Gly-Gly-AMP + S-sulfanyl-L-cysteinyl-[cysteine desulfurase] + AH2 = [ThiS sulfur-carrier protein]-C-terminal-Gly-aminoethanethioate + L-cysteinyl-[cysteine desulfurase] + A + AMP + 2 H(+). The protein operates within cofactor biosynthesis; thiamine diphosphate biosynthesis. Its function is as follows. Catalyzes the ATP-dependent transfer of a sulfur to tRNA to produce 4-thiouridine in position 8 of tRNAs, which functions as a near-UV photosensor. Also catalyzes the transfer of sulfur to the sulfur carrier protein ThiS, forming ThiS-thiocarboxylate. This is a step in the synthesis of thiazole, in the thiamine biosynthesis pathway. The sulfur is donated as persulfide by IscS. The sequence is that of Probable tRNA sulfurtransferase from Treponema pallidum subsp. pallidum (strain SS14).